The sequence spans 319 residues: Malate dehydrogenase (319 aa).

Residues 7–13 and Asp34 contribute to the NAD(+) site; that span reads GAAGGIG. Substrate-binding residues include Arg81 and Arg87. Residues Asn94 and 117 to 119 contribute to the NAD(+) site; that span reads ITN. Residues Asn119 and Arg153 each contribute to the substrate site. His177 acts as the Proton acceptor in catalysis. NAD(+) is bound at residue Met227.

The protein belongs to the LDH/MDH superfamily. MDH type 1 family. Homodimer.

The catalysed reaction is (S)-malate + NAD(+) = oxaloacetate + NADH + H(+). Its function is as follows. Catalyzes the reversible oxidation of malate to oxaloacetate. The polypeptide is Malate dehydrogenase (Psychromonas ingrahamii (strain DSM 17664 / CCUG 51855 / 37)).